Reading from the N-terminus, the 155-residue chain is Small ribosomal subunit protein uS7cz/uS7cy (155 aa).

Belongs to the universal ribosomal protein uS7 family. In terms of assembly, part of the 30S ribosomal subunit.

The protein resides in the plastid. Its subcellular location is the chloroplast. In terms of biological role, one of the primary rRNA binding proteins, it binds directly to 16S rRNA where it nucleates assembly of the head domain of the 30S subunit. In Pelargonium hortorum (Common geranium), this protein is Small ribosomal subunit protein uS7cz/uS7cy (rps7-A).